We begin with the raw amino-acid sequence, 205 residues long: GTP cyclohydrolase-2 (205 aa).

Arg-49 to Glu-53 provides a ligand contact to GTP. Zn(2+) is bound by residues Cys-54, Cys-65, and Cys-67. GTP-binding positions include Gln-70, Glu-92–Arg-94, and Thr-114. Asp-126 functions as the Proton acceptor in the catalytic mechanism. The Nucleophile role is filled by Arg-128. GTP is bound by residues Thr-149 and Lys-154.

Belongs to the GTP cyclohydrolase II family. Requires Zn(2+) as cofactor.

It catalyses the reaction GTP + 4 H2O = 2,5-diamino-6-hydroxy-4-(5-phosphoribosylamino)-pyrimidine + formate + 2 phosphate + 3 H(+). Its pathway is cofactor biosynthesis; riboflavin biosynthesis; 5-amino-6-(D-ribitylamino)uracil from GTP: step 1/4. In terms of biological role, catalyzes the conversion of GTP to 2,5-diamino-6-ribosylamino-4(3H)-pyrimidinone 5'-phosphate (DARP), formate and pyrophosphate. In Pseudomonas syringae pv. tomato (strain ATCC BAA-871 / DC3000), this protein is GTP cyclohydrolase-2.